Consider the following 250-residue polypeptide: Sperm-egg fusion protein Juno (250 aa).

The first 19 residues, 1-19 (MACWWPLLLELWTVMPTWA), serve as a signal peptide directing secretion. 8 cysteine pairs are disulfide-bonded: Cys27/Cys55, Cys47/Cys95, Cys56/Cys99, Cys79/Cys172, Cys86/Cys143, Cys132/Cys206, Cys136/Cys186, and Cys149/Cys166. Residues 62 to 81 (WEAHLDVSPLYNFSLFHCGL) form an important for interaction with IZUMO1 region. Asn73 carries N-linked (GlcNAc...) asparagine glycosylation. Ser228 carries the GPI-anchor amidated serine lipid modification. Positions 229–250 (SAPSWELSYTIMVCSLFLPFLS) are excised as a propeptide.

Belongs to the folate receptor family. Monomer. Interacts with IZUMO1; the interaction is direct. IZUMO1 and IZUMO1R/JUNO form a complex with 1:1 stoichiometry. Interacts with FCRL3/MAIA; FCRL3/MAIA replaces IZUMO1R/JUNO as IZUMO1 receptor after sperm-egg adhesion, thereby permitting species-specific gamete fusion. Interacts with WDR54. The protein is rapidly cleaved following fertilization, being only weakly detectable in zona-intact fertilized eggs at telophase II and undetectable at the pronuclear stage. Sheding is probably required to block to polyspermy and ensuring egg fusion with a single sperm. Expressed in unfertilized oocytes (at protein level).

Its subcellular location is the cell membrane. The protein localises to the cell projection. It localises to the microvillus membrane. In terms of biological role, receptor for IZUMO1 present at the cell surface of oocytes (oolemma), which is essential for species-specific gamete recognition and fertilization. The IZUMO1:IZUMO1R/JUNO interaction is a necessary adhesion event between sperm and egg that is required for fertilization but is not sufficient for cell fusion. The ligand-receptor interaction probably does not act as a membrane 'fusogen'. Does not bind folate. This Homo sapiens (Human) protein is Sperm-egg fusion protein Juno.